The sequence spans 827 residues: Probable beta-glucosidase H (827 aa).

Aspartate 223 is an active-site residue. Residues 387-546 (RLLTNAVMHF…DSAEMVRSAV (160 aa)) enclose the PA14 domain. N-linked (GlcNAc...) asparagine glycans are attached at residues asparagine 471, asparagine 594, asparagine 600, and asparagine 625.

The protein belongs to the glycosyl hydrolase 3 family.

It localises to the secreted. The catalysed reaction is Hydrolysis of terminal, non-reducing beta-D-glucosyl residues with release of beta-D-glucose.. Its pathway is glycan metabolism; cellulose degradation. In terms of biological role, beta-glucosidases are one of a number of cellulolytic enzymes involved in the degradation of cellulosic biomass. Catalyzes the last step releasing glucose from the inhibitory cellobiose. This is Probable beta-glucosidase H (bglH) from Aspergillus oryzae (strain ATCC 42149 / RIB 40) (Yellow koji mold).